Reading from the N-terminus, the 424-residue chain is Serine--tRNA ligase (424 aa).

Residue 229 to 231 (TAE) coordinates L-serine. 260–262 (RRE) contributes to the ATP binding site. L-serine is bound at residue glutamate 283. An ATP-binding site is contributed by 347-350 (EVSS). Serine 383 lines the L-serine pocket.

This sequence belongs to the class-II aminoacyl-tRNA synthetase family. Type-1 seryl-tRNA synthetase subfamily. As to quaternary structure, homodimer. The tRNA molecule binds across the dimer.

The protein resides in the cytoplasm. It carries out the reaction tRNA(Ser) + L-serine + ATP = L-seryl-tRNA(Ser) + AMP + diphosphate + H(+). The enzyme catalyses tRNA(Sec) + L-serine + ATP = L-seryl-tRNA(Sec) + AMP + diphosphate + H(+). Its pathway is aminoacyl-tRNA biosynthesis; selenocysteinyl-tRNA(Sec) biosynthesis; L-seryl-tRNA(Sec) from L-serine and tRNA(Sec): step 1/1. In terms of biological role, catalyzes the attachment of serine to tRNA(Ser). Is also able to aminoacylate tRNA(Sec) with serine, to form the misacylated tRNA L-seryl-tRNA(Sec), which will be further converted into selenocysteinyl-tRNA(Sec). This is Serine--tRNA ligase from Roseiflexus castenholzii (strain DSM 13941 / HLO8).